Here is a 252-residue protein sequence, read N- to C-terminus: ATP synthase subunit a (252 aa).

6 consecutive transmembrane segments (helical) span residues 29 to 49 (FTNV…FLFI), 87 to 107 (FFPL…IGLF), 117 to 137 (IMIT…YGFY), 146 to 166 (LFVP…IEII), 196 to 216 (FIVS…LPLI), and 219 to 239 (VAIT…FTVL).

The protein belongs to the ATPase A chain family. In terms of assembly, F-type ATPases have 2 components, CF(1) - the catalytic core - and CF(0) - the membrane proton channel. CF(1) has five subunits: alpha(3), beta(3), gamma(1), delta(1), epsilon(1). CF(0) has three main subunits: a(1), b(2) and c(9-12). The alpha and beta chains form an alternating ring which encloses part of the gamma chain. CF(1) is attached to CF(0) by a central stalk formed by the gamma and epsilon chains, while a peripheral stalk is formed by the delta and b chains.

The protein localises to the cell inner membrane. Its function is as follows. Key component of the proton channel; it plays a direct role in the translocation of protons across the membrane. The polypeptide is ATP synthase subunit a (Bartonella tribocorum (strain CIP 105476 / IBS 506)).